Here is a 246-residue protein sequence, read N- to C-terminus: Large ribosomal subunit protein uL3 (246 aa).

At Gln-151 the chain carries N5-methylglutamine.

Belongs to the universal ribosomal protein uL3 family. Part of the 50S ribosomal subunit. Forms a cluster with proteins L14 and L19. Methylated by PrmB.

In terms of biological role, one of the primary rRNA binding proteins, it binds directly near the 3'-end of the 23S rRNA, where it nucleates assembly of the 50S subunit. This is Large ribosomal subunit protein uL3 from Bartonella quintana (strain Toulouse) (Rochalimaea quintana).